Reading from the N-terminus, the 1038-residue chain is Translation initiation factor IF-2 (1038 aa).

The tract at residues glycine 32–arginine 442 is disordered. Low complexity-rich tracts occupy residues proline 65 to proline 77, proline 100 to proline 113, and proline 131 to alanine 147. Composition is skewed to basic and acidic residues over residues serine 204–serine 217 and arginine 275–lysine 295. The span at proline 311–alanine 328 shows a compositional bias: low complexity. The segment covering proline 331–lysine 344 has biased composition (basic and acidic residues). Residues histidine 422–glycine 435 are compositionally biased toward basic residues. The 168-residue stretch at alanine 529–glutamate 696 folds into the tr-type G domain. The G1 stretch occupies residues glycine 538–threonine 545. GTP is bound at residue glycine 538–threonine 545. The G2 stretch occupies residues glycine 563 to histidine 567. Residues aspartate 584–glycine 587 form a G3 region. GTP contacts are provided by residues aspartate 584–histidine 588 and asparagine 638–aspartate 641. Positions asparagine 638 to aspartate 641 are G4. The interval serine 674–threonine 676 is G5.

Belongs to the TRAFAC class translation factor GTPase superfamily. Classic translation factor GTPase family. IF-2 subfamily.

The protein localises to the cytoplasm. Functionally, one of the essential components for the initiation of protein synthesis. Protects formylmethionyl-tRNA from spontaneous hydrolysis and promotes its binding to the 30S ribosomal subunits. Also involved in the hydrolysis of GTP during the formation of the 70S ribosomal complex. This chain is Translation initiation factor IF-2, found in Rhodopirellula baltica (strain DSM 10527 / NCIMB 13988 / SH1).